The following is a 233-amino-acid chain: Tetrahydromethanopterin S-methyltransferase subunit D (233 aa).

6 helical membrane passes run 4–24 (LLLIGAITAGGVLIGGGVHFV), 39–59 (VGTGTAMLAAGAGLTGLITAA), 67–87 (LMIMAAGAVGSMLMIGITMLV), 133–153 (FVSGIIGGALGGIGGGLIYWA), 166–186 (MGAAGVAAIFAVGIFFINAVI), and 209–229 (GIVACLIASIVAGALSTLLVY).

The protein belongs to the MtrD family. The complex is composed of 8 subunits; MtrA, MtrB, MtrC, MtrD, MtrE, MtrF, MtrG and MtrH.

The protein localises to the cell membrane. The catalysed reaction is 5-methyl-5,6,7,8-tetrahydromethanopterin + coenzyme M + 2 Na(+)(in) = 5,6,7,8-tetrahydromethanopterin + methyl-coenzyme M + 2 Na(+)(out). The protein operates within one-carbon metabolism; methanogenesis from CO(2); methyl-coenzyme M from 5,10-methylene-5,6,7,8-tetrahydromethanopterin: step 2/2. Part of a complex that catalyzes the formation of methyl-coenzyme M and tetrahydromethanopterin from coenzyme M and methyl-tetrahydromethanopterin. This is an energy-conserving, sodium-ion translocating step. This is Tetrahydromethanopterin S-methyltransferase subunit D from Methanothermobacter marburgensis (strain ATCC BAA-927 / DSM 2133 / JCM 14651 / NBRC 100331 / OCM 82 / Marburg) (Methanobacterium thermoautotrophicum).